The following is a 495-amino-acid chain: Putative myristoylated membrane protein 458R (495 aa).

Gly-2 carries the N-myristoyl glycine; by host lipid modification. Asn-58, Asn-71, Asn-72, Asn-103, and Asn-111 each carry an N-linked (GlcNAc...) asparagine; by host glycan. Residues 150–182 are a coiled coil; it reads HLKEIHKIITKEVENAKNNNKDVTKLIEQFSQA. 2 consecutive transmembrane segments (helical) span residues 194–214 and 216–236; these read ILSL…YVGG and IAFP…FNWT. Residues Asn-262, Asn-314, Asn-317, Asn-349, and Asn-457 are each glycosylated (N-linked (GlcNAc...) asparagine; by host). The chain crosses the membrane as a helical span at residues 469-489; it reads LWLLCVAVILLFIGIIGMGLG.

This sequence belongs to the IIV-6 118L/458R family.

The protein resides in the membrane. This Acheta domesticus (House cricket) protein is Putative myristoylated membrane protein 458R.